Consider the following 573-residue polypeptide: Estrogen receptor beta (573 aa).

The tract at residues 15 to 170 (QEVDSSKVGE…CFAGKGDMHF (156 aa)) is modulating. NR C4-type zinc fingers lie at residues 171–191 (CAVC…CEGC) and 207–231 (CPAT…LRKC). The nuclear receptor DNA-binding region spans 171-236 (CAVCHDYASG…RLRKCYEVGM (66 aa)). The NR LBD domain occupies 291 to 527 (TPEQLINRII…DLLLEMLDAN (237 aa)). Composition is skewed to low complexity over residues 534-552 (MSAS…AQSQ) and 559-573 (CSGE…SSTI). Residues 534–573 (MSASYSSQPSPWSQAAQSQPGPPPSCSGECPCPPKESSTI) are disordered.

This sequence belongs to the nuclear hormone receptor family. NR3 subfamily. Binds DNA as a homodimer. Can form a heterodimer with ER-alpha. In terms of tissue distribution, liver.

Its subcellular location is the nucleus. Its function is as follows. Binds estrogens with an affinity similar to that of ER-alpha, and activates expression of reporter genes containing estrogen response elements (ERE) in an estrogen-dependent manner. This is Estrogen receptor beta (esr2) from Anguilla japonica (Japanese eel).